An 87-amino-acid polypeptide reads, in one-letter code: DNA-directed RNA polymerase subunit omega (87 aa).

Belongs to the RNA polymerase subunit omega family. As to quaternary structure, the RNAP catalytic core consists of 2 alpha, 1 beta, 1 beta' and 1 omega subunit. When a sigma factor is associated with the core the holoenzyme is formed, which can initiate transcription.

The catalysed reaction is RNA(n) + a ribonucleoside 5'-triphosphate = RNA(n+1) + diphosphate. Functionally, promotes RNA polymerase assembly. Latches the N- and C-terminal regions of the beta' subunit thereby facilitating its interaction with the beta and alpha subunits. This is DNA-directed RNA polymerase subunit omega from Pseudomonas entomophila (strain L48).